The chain runs to 417 residues: Phosphoribosylamine--glycine ligase (417 aa).

In terms of domain architecture, ATP-grasp spans 107 to 313; that stretch reads KQIMAKYEIP…FLEIIEATLE (207 aa). 133–194 is an ATP binding site; sequence LKETWYPVVI…EEMLYGKEAS (62 aa). Residues E283 and N285 each contribute to the Mg(2+) site.

It belongs to the GARS family. Requires Mg(2+) as cofactor. Mn(2+) serves as cofactor.

The enzyme catalyses 5-phospho-beta-D-ribosylamine + glycine + ATP = N(1)-(5-phospho-beta-D-ribosyl)glycinamide + ADP + phosphate + H(+). It participates in purine metabolism; IMP biosynthesis via de novo pathway; N(1)-(5-phospho-D-ribosyl)glycinamide from 5-phospho-alpha-D-ribose 1-diphosphate: step 2/2. This chain is Phosphoribosylamine--glycine ligase, found in Caldanaerobacter subterraneus subsp. tengcongensis (strain DSM 15242 / JCM 11007 / NBRC 100824 / MB4) (Thermoanaerobacter tengcongensis).